A 1801-amino-acid chain; its full sequence is Sperm flagellar protein 2 (1801 aa).

The 105-residue stretch at M1–Q105 folds into the Calponin-homology (CH) domain. 2 coiled-coil regions span residues E176–Q260 and A321–A395. A disordered region spans residues Q632–E659. Coiled-coil stretches lie at residues N722 to M748 and A869 to S895. Basic and acidic residues-rich tracts occupy residues L883 to S892 and E909 to Q918. A disordered region spans residues L883 to D949. Residues E1051–I1077 are a coiled coil. Composition is skewed to basic and acidic residues over residues R1233 to S1250 and K1261 to K1295. Disordered regions lie at residues R1233 to V1304, K1651 to T1695, and S1781 to K1801. Residues Q1252 to P1286 are a coiled coil. The segment at E1305 to V1657 is interaction with IFT20. A coiled-coil region spans residues E1665 to T1695. Positions N1669–E1687 are enriched in basic and acidic residues.

In terms of assembly, interacts (via C-terminus) with IFT20. Interacts with DYNC1I2. In terms of tissue distribution, predominantly expressed in ciliated tissues such as lung, trachea, testis, brain, and at lower levels in kidney and spleen.

It localises to the cell projection. It is found in the cilium. The protein localises to the flagellum. Its subcellular location is the cytoplasm. The protein resides in the golgi apparatus. Required for correct axoneme development in spermatozoa. Important for normal development of the manchette and sperm head morphology. Essential for male fertility. Plays a role in localization of the intraflagellar transport protein IFT20 to the manchette, suggesting function as an adapter for dynein-mediated protein transport during spermatogenesis. Also plays a role in bone growth where it seems to be required for normal osteoblast differentiation. This chain is Sperm flagellar protein 2 (Spef2), found in Rattus norvegicus (Rat).